The following is a 291-amino-acid chain: D-alanyl-D-alanine carboxypeptidase (291 aa).

An N-terminal signal peptide occupies residues 1-29 (MRLRRAAATVITTGALLAAGTLGATPATA). The active-site Acyl-ester intermediate is serine 64. The Proton acceptor role is filled by lysine 67. Serine 125 is an active-site residue. Lysine 242 provides a ligand contact to substrate.

It belongs to the peptidase S11 family.

The protein localises to the secreted. It catalyses the reaction Preferential cleavage: (Ac)2-L-Lys-D-Ala-|-D-Ala. Also transpeptidation of peptidyl-alanyl moieties that are N-acyl substituents of D-alanine.. The protein operates within cell wall biogenesis; peptidoglycan biosynthesis. Removes C-terminal D-alanyl residues from sugar-peptide cell wall precursors. This Streptomyces sp. (strain K15) protein is D-alanyl-D-alanine carboxypeptidase.